The chain runs to 217 residues: Ribonuclease HII (217 aa).

The RNase H type-2 domain maps to 26-215 (EIVCGVDEAG…VREALDLMAG (190 aa)). 3 residues coordinate a divalent metal cation: Asp-32, Glu-33, and Asp-124.

Belongs to the RNase HII family. Requires Mn(2+) as cofactor. The cofactor is Mg(2+).

It localises to the cytoplasm. The enzyme catalyses Endonucleolytic cleavage to 5'-phosphomonoester.. Functionally, endonuclease that specifically degrades the RNA of RNA-DNA hybrids. The protein is Ribonuclease HII of Burkholderia ambifaria (strain ATCC BAA-244 / DSM 16087 / CCUG 44356 / LMG 19182 / AMMD) (Burkholderia cepacia (strain AMMD)).